The chain runs to 261 residues: ER membrane protein complex subunit 3 (261 aa).

The Lumenal portion of the chain corresponds to 2–14 (AGPELLLDSNIRL). A helical transmembrane segment spans residues 15-38 (WVVLPIVIITFFVGMIRHYVSILL). At 39 to 114 (QSDKKLTQEQ…TMLTDMMKGN (76 aa)) the chain is on the cytoplasmic side. Residues 115-130 (VTNVLPMILIGGWINM) traverse the membrane as a helical segment. The Lumenal segment spans residues 131–168 (TFSGFVTTKVPFPLTLRFKPMLQQGIELLTLDASWVSS). The chain crosses the membrane as a helical span at residues 169-187 (ASWYFLNVFGLRSIYSLIL). Residues 188–261 (GQDNAADQSR…FKKELQTSIF (74 aa)) are Cytoplasmic-facing.

Belongs to the EMC3 family. In terms of assembly, component of the ER membrane protein complex (EMC).

The protein resides in the endoplasmic reticulum membrane. Functionally, part of the endoplasmic reticulum membrane protein complex (EMC) that enables the energy-independent insertion into endoplasmic reticulum membranes of newly synthesized membrane proteins. Preferentially accommodates proteins with transmembrane domains that are weakly hydrophobic or contain destabilizing features such as charged and aromatic residues. Involved in the cotranslational insertion of multi-pass membrane proteins in which stop-transfer membrane-anchor sequences become ER membrane spanning helices. It is also required for the post-translational insertion of tail-anchored/TA proteins in endoplasmic reticulum membranes. By mediating the proper cotranslational insertion of N-terminal transmembrane domains in an N-exo topology, with translocated N-terminus in the lumen of the ER, controls the topology of multi-pass membrane proteins like the G protein-coupled receptors. By regulating the insertion of various proteins in membranes, it is indirectly involved in many cellular processes. The protein is ER membrane protein complex subunit 3 (EMC3) of Homo sapiens (Human).